The primary structure comprises 33 residues: uncharacterized protein (33 aa).

Residues 1–33 form a disordered region; it reads MGSVIKKRRKRMSKKKHRKLLRRTRVQRRKLGK.

This is an uncharacterized protein from Mycobacterium tuberculosis (strain CDC 1551 / Oshkosh).